A 319-amino-acid polypeptide reads, in one-letter code: Protein SICKLE (319 aa).

Disordered regions lie at residues 1–59 (MEDS…TQRF), 71–239 (SFKK…PGAE), and 262–299 (CSDASSSSSTGQAWLPKSIAPKKSVTSEATHKTSSNQQ). 2 stretches are compositionally biased toward polar residues: residues 27–56 (TTGTETSMSTGHLSNPLAETSNHQQDSFET) and 78–88 (PKQQYISSPSH). Positions 93–103 (PVPPQFPPSVP) are enriched in pro residues. Residues 185-210 (SYNNTPPQFSNYGRQNANWGGNTYPN) show a composition bias toward polar residues. Residues 228–238 (DGGRRPMEPGA) show a composition bias toward basic and acidic residues. Over residues 285–299 (SVTSEATHKTSSNQQ) the composition is skewed to polar residues.

In terms of assembly, interacts with ubiquitin thioesterases UBP12 and UBP13, and with protein phosphatase 2A subunits PP2AB1, PP2AB2, PP2A3, PP2A4, PP2AA1 and PP2AA2. As to expression, expressed in the shoot apical meristem (SAM), embryos, seedlings, root tips, and root and leaf primordia.

Its subcellular location is the nucleus. The protein resides in the cytoplasm. The protein localises to the cytosol. In terms of biological role, involved in miRNAs and siRNAs biogenesis and thus promotes gene silencing. Modulates auxin (IAA) transport-related developmental programs by regulating protein phosphatase 2A (PP2As)-driven auxin efflux carrier PIN proteins recycling and polarity. Required during development. Necessary for abiotic stress (e.g. chilling and salt) tolerance. The protein is Protein SICKLE of Arabidopsis thaliana (Mouse-ear cress).